A 354-amino-acid polypeptide reads, in one-letter code: Guanine nucleotide-binding protein G(t) subunit alpha-2 (354 aa).

Positions 1–27 are disordered; the sequence is MGSGASAEDKELAKRSKELEKKLQEDA. The N-myristoyl glycine moiety is linked to residue G2. Basic and acidic residues predominate over residues 7–27; it reads AEDKELAKRSKELEKKLQEDA. One can recognise a G-alpha domain in the interval 32-354; it reads KTVKLLLLGA…KENLKDCGLF (323 aa). A G1 motif region spans residues 35-48; that stretch reads KLLLLGAGESGKST. Residues 40–47, 175–181, 200–204, 269–272, and A326 each bind GTP; these read GAGESGKS, LRSRVKT, DVGGQ, and NKKD. S47 serves as a coordination point for Mg(2+). The segment at 173-181 is G2 motif; it reads DVLRSRVKT. ADP-ribosylarginine; by cholera toxin is present on R178. T181 contacts Mg(2+). Positions 196 to 205 are G3 motif; sequence FRMFDVGGQR. The interval 265 to 272 is G4 motif; the sequence is VLFLNKKD. The G5 motif stretch occupies residues 324–329; it reads TCATDT. The residue at position 351 (C351) is an ADP-ribosylcysteine; by pertussis toxin.

The protein belongs to the G-alpha family. G(i/o/t/z) subfamily. G proteins are composed of 3 units; alpha, beta and gamma. The alpha chain contains the guanine nucleotide binding site. Retinal rod outer segment.

It localises to the cell projection. The protein localises to the cilium. It is found in the photoreceptor outer segment. Its subcellular location is the photoreceptor inner segment. Functionally, guanine nucleotide-binding proteins (G proteins) are involved as modulators or transducers in various transmembrane signaling systems. Transducin is an amplifier and one of the transducers of a visual impulse that performs the coupling between rhodopsin and cGMP-phosphodiesterase. This Homo sapiens (Human) protein is Guanine nucleotide-binding protein G(t) subunit alpha-2 (GNAT2).